A 508-amino-acid polypeptide reads, in one-letter code: Photosystem II CP47 reaction center protein (508 aa).

Transmembrane regions (helical) follow at residues 21 to 36, 101 to 115, 140 to 156, 203 to 218, 237 to 252, and 457 to 472; these read AVHI…WAGS, ILFS…IWHW, GIHL…FGAF, IAAG…FHLS, VLSS…AFVV, and SFAL…HGAR.

It belongs to the PsbB/PsbC family. PsbB subfamily. In terms of assembly, PSII is composed of 1 copy each of membrane proteins PsbA, PsbB, PsbC, PsbD, PsbE, PsbF, PsbH, PsbI, PsbJ, PsbK, PsbL, PsbM, PsbT, PsbX, PsbY, PsbZ, Psb30/Ycf12, at least 3 peripheral proteins of the oxygen-evolving complex and a large number of cofactors. It forms dimeric complexes. Requires Binds multiple chlorophylls. PSII binds additional chlorophylls, carotenoids and specific lipids. as cofactor.

It is found in the plastid. It localises to the chloroplast thylakoid membrane. One of the components of the core complex of photosystem II (PSII). It binds chlorophyll and helps catalyze the primary light-induced photochemical processes of PSII. PSII is a light-driven water:plastoquinone oxidoreductase, using light energy to abstract electrons from H(2)O, generating O(2) and a proton gradient subsequently used for ATP formation. The protein is Photosystem II CP47 reaction center protein of Oenothera biennis (German evening primrose).